The chain runs to 343 residues: Methionine import ATP-binding protein MetN 1 (343 aa).

The ABC transporter domain maps to Ile2 to Ile241. ATP is bound at residue Gly38–Ser45.

It belongs to the ABC transporter superfamily. Methionine importer (TC 3.A.1.24) family. As to quaternary structure, the complex is composed of two ATP-binding proteins (MetN), two transmembrane proteins (MetI) and a solute-binding protein (MetQ).

It is found in the cell inner membrane. It catalyses the reaction L-methionine(out) + ATP + H2O = L-methionine(in) + ADP + phosphate + H(+). The catalysed reaction is D-methionine(out) + ATP + H2O = D-methionine(in) + ADP + phosphate + H(+). Functionally, part of the ABC transporter complex MetNIQ involved in methionine import. Responsible for energy coupling to the transport system. The chain is Methionine import ATP-binding protein MetN 1 from Salmonella typhi.